We begin with the raw amino-acid sequence, 607 residues long: Leucine-rich repeat-containing protein 63 (607 aa).

7 LRR repeats span residues 357-378 (QLVY…VLYL), 380-401 (NLQV…IQQL), 403-424 (YLRK…LFCL), 426-447 (YLEE…IQKL), 449-470 (SLEK…ILKL), 471-497 (NLVK…NPPR), and 498-524 (LTHI…VVQK).

The protein is Leucine-rich repeat-containing protein 63 (Lrrc63) of Rattus norvegicus (Rat).